The chain runs to 473 residues: Dihydrolipoyl dehydrogenase (473 aa).

Residues 36–45 (ERYDKLGGVC), lysine 54, and alanine 117 each bind FAD. An intrachain disulfide couples cysteine 45 to cysteine 50. Residues 182-186 (GSGII), aspartate 205, and 270-273 (AIGR) contribute to the NAD(+) site. FAD-binding residues include aspartate 313 and alanine 321. Histidine 445 serves as the catalytic Proton acceptor.

This sequence belongs to the class-I pyridine nucleotide-disulfide oxidoreductase family. As to quaternary structure, homodimer. The cofactor is FAD.

It localises to the cytoplasm. It catalyses the reaction N(6)-[(R)-dihydrolipoyl]-L-lysyl-[protein] + NAD(+) = N(6)-[(R)-lipoyl]-L-lysyl-[protein] + NADH + H(+). Lipoamide dehydrogenase is a component of the alpha-ketoacid dehydrogenase complexes. The protein is Dihydrolipoyl dehydrogenase (lpdA) of Buchnera aphidicola subsp. Acyrthosiphon pisum (strain APS) (Acyrthosiphon pisum symbiotic bacterium).